Here is a 24-residue protein sequence, read N- to C-terminus: 60 kDa chaperonin, mitochondrial (24 aa).

The protein belongs to the chaperonin (HSP60) family. In terms of assembly, forms a single seven-member ring complex, in tight association with the p63 protein. As to expression, testis.

It localises to the mitochondrion. Its function is as follows. Implicated in mitochondrial protein import and macromolecular assembly. May facilitate the correct folding of imported proteins. May also prevent misfolding and promote the refolding and proper assembly of unfolded polypeptides generated under stress conditions in the mitochondrial matrix. This Heliothis virescens (Tobacco budworm moth) protein is 60 kDa chaperonin, mitochondrial.